Here is a 170-residue protein sequence, read N- to C-terminus: Probable phospholipid hydroperoxide glutathione peroxidase (170 aa).

Residue Cys-44 is part of the active site.

Belongs to the glutathione peroxidase family.

The protein localises to the cytoplasm. The catalysed reaction is a hydroperoxy polyunsaturated fatty acid + 2 glutathione = a hydroxy polyunsaturated fatty acid + glutathione disulfide + H2O. Functionally, protects cells and enzymes from oxidative damage, by catalyzing the reduction of hydrogen peroxide, lipid peroxides and organic hydroperoxide, by glutathione. The polypeptide is Probable phospholipid hydroperoxide glutathione peroxidase (GPXMC1) (Mesembryanthemum crystallinum (Common ice plant)).